The sequence spans 746 residues: Long-chain-alcohol oxidase FAO3 (746 aa).

A helical membrane pass occupies residues 139-159 (ILTPIRAAFVYIKVAFLFCFF). Residue 233 to 248 (CDVVVVGSGSGGGVAA) participates in FAD binding. Catalysis depends on His677, which acts as the Proton acceptor.

It belongs to the GMC oxidoreductase family.

The protein localises to the membrane. It catalyses the reaction a long-chain primary fatty alcohol + O2 = a long-chain fatty aldehyde + H2O2. Its function is as follows. Long-chain fatty alcohol oxidase involved in the omega-oxidation pathway of lipid degradation. The sequence is that of Long-chain-alcohol oxidase FAO3 (FAO3) from Arabidopsis thaliana (Mouse-ear cress).